A 339-amino-acid chain; its full sequence is F420-dependent glucose-6-phosphate dehydrogenase (339 aa).

A coenzyme F420-(gamma-Glu)n-binding site is contributed by Asp41. His42 serves as the catalytic Proton donor. Coenzyme F420-(gamma-Glu)n is bound by residues Thr78 and Thr109–Gly110. Glu111 serves as the catalytic Proton acceptor. Residues Asn114, Ser177 to Gly178, and Ala180 to Ala181 contribute to the coenzyme F420-(gamma-Glu)n site. Positions 195, 198, 259, and 283 each coordinate substrate.

It belongs to the F420-dependent glucose-6-phosphate dehydrogenase family. In terms of assembly, homodimer.

It catalyses the reaction oxidized coenzyme F420-(gamma-L-Glu)(n) + D-glucose 6-phosphate + H(+) = 6-phospho-D-glucono-1,5-lactone + reduced coenzyme F420-(gamma-L-Glu)(n). In terms of biological role, catalyzes the coenzyme F420-dependent oxidation of glucose 6-phosphate (G6P) to 6-phosphogluconolactone. This is F420-dependent glucose-6-phosphate dehydrogenase from Nakamurella multipartita (strain ATCC 700099 / DSM 44233 / CIP 104796 / JCM 9543 / NBRC 105858 / Y-104) (Microsphaera multipartita).